The chain runs to 160 residues: Sodium/proline symporter (160 aa).

Helical transmembrane passes span 6–26 and 68–88; these read PMLVTFIVYIFGMVLIGFIAW and IFISGISESWIAIGLTLGAWI.

It belongs to the sodium:solute symporter (SSF) (TC 2.A.21) family.

It localises to the cell inner membrane. The catalysed reaction is L-proline(in) + Na(+)(in) = L-proline(out) + Na(+)(out). In terms of biological role, catalyzes the sodium-dependent uptake of extracellular L-proline. This chain is Sodium/proline symporter, found in Klebsiella oxytoca.